A 289-amino-acid polypeptide reads, in one-letter code: ATP synthase gamma chain (289 aa).

This sequence belongs to the ATPase gamma chain family. F-type ATPases have 2 components, CF(1) - the catalytic core - and CF(0) - the membrane proton channel. CF(1) has five subunits: alpha(3), beta(3), gamma(1), delta(1), epsilon(1). CF(0) has three main subunits: a, b and c.

The protein localises to the cell inner membrane. In terms of biological role, produces ATP from ADP in the presence of a proton gradient across the membrane. The gamma chain is believed to be important in regulating ATPase activity and the flow of protons through the CF(0) complex. The polypeptide is ATP synthase gamma chain (Nitrosococcus oceani (strain ATCC 19707 / BCRC 17464 / JCM 30415 / NCIMB 11848 / C-107)).